The primary structure comprises 297 residues: ABSCISIC ACID-INSENSITIVE 5-like protein 2 (297 aa).

Phosphoserine is present on residues Ser-21, Ser-43, and Ser-81. Disordered stretches follow at residues 100-119 and 138-157; these read IQQN…QPTL and IPGS…SGAG. Phosphothreonine is present on Thr-118. Residues 146-157 are compositionally biased toward gly residues; that stretch reads PVGGGSAGSGAG. Positions 225-288 constitute a bZIP domain; that stretch reads VERRQKRMIK…SVPPPDPKRQ (64 aa). The tract at residues 227–246 is basic motif; that stretch reads RRQKRMIKNRESAARSRARK. The segment at 253–267 is leucine-zipper; it reads LEIKVSRLEEENERL. The tract at residues 272 to 297 is disordered; sequence EVEKILPSVPPPDPKRQLRRTSSAPF.

The protein belongs to the bZIP family. ABI5 subfamily. In terms of assembly, DNA-binding heterodimer with ABI5/DPBF1, DPBF2 or EEL/DPBF4. Interacts with the AFP proteins AFP1, AFP2, AFP3 and AFP4. Predominantly expressed in seeds.

It localises to the nucleus. Functionally, binds to the embryo specification element and the ABA-responsive element (ABRE) of the Dc3 gene promoter. Could participate in abscisic acid-regulated gene expression during seed development. The protein is ABSCISIC ACID-INSENSITIVE 5-like protein 2 (DPBF3) of Arabidopsis thaliana (Mouse-ear cress).